Here is a 172-residue protein sequence, read N- to C-terminus: MALRIEDKKAIVAEVAEQMSSALSAAVADYRGLTVNEMTSLRKQARESGVYLRVVRNNLARLAIKGTEFECLADALKGPLVLALSKDAPGAAAKLFKNFQKDHNAFEVKNLAMSGELFGPEKLDDFAKLPTREEALATLLNVMQAPVTKFVRTLNEIPSQAVRVFAAVGDSK.

The protein belongs to the universal ribosomal protein uL10 family. In terms of assembly, part of the ribosomal stalk of the 50S ribosomal subunit. The N-terminus interacts with L11 and the large rRNA to form the base of the stalk. The C-terminus forms an elongated spine to which L12 dimers bind in a sequential fashion forming a multimeric L10(L12)X complex.

Functionally, forms part of the ribosomal stalk, playing a central role in the interaction of the ribosome with GTP-bound translation factors. The polypeptide is Large ribosomal subunit protein uL10 (Francisella tularensis subsp. mediasiatica (strain FSC147)).